The following is a 148-amino-acid chain: Large ribosomal subunit protein uL15 (148 aa).

The span at 1-12 shows a compositional bias: basic and acidic residues; the sequence is MSDPIKLHDLRP. Positions 1–45 are disordered; sequence MSDPIKLHDLRPAKGANKAKTRVGRGEASKGKTAGRGTKGTKARN.

The protein belongs to the universal ribosomal protein uL15 family. Part of the 50S ribosomal subunit.

In terms of biological role, binds to the 23S rRNA. The polypeptide is Large ribosomal subunit protein uL15 (Corynebacterium urealyticum (strain ATCC 43042 / DSM 7109)).